Reading from the N-terminus, the 477-residue chain is Acetolactate synthase small subunit 2, chloroplastic (477 aa).

The transit peptide at 1 to 53 (MAATTTATSLFSSRLHFQNQNQGYGFPAKTPNSLQVNQIIDGRKMRNATVLSA) directs the protein to the chloroplast. 2 consecutive ACT domains span residues 78–150 (TISV…DLSK) and 309–383 (TLSL…NITH). L-valine contacts are provided by Asp-85, Ile-89, Ile-90, Asn-103, Ile-104, Asn-316, Val-320, Leu-321, Asn-334, and Ile-335.

This sequence belongs to the acetolactate synthase small subunit family. As to quaternary structure, the acetolactate synthase complex contains 4 homodimers of the large catalytic subunits, and 1 homotetramer of the small regulatory subunits. As to expression, expressed in roots in the vascular tissuem in cells around the quiescent center, in floral organs at the tips of young siliques and in the joint region between the silique and the pedicel. Barely detectable in mature leaves or siliques.

It is found in the plastid. It localises to the chloroplast. Its subcellular location is the peroxisome. It participates in amino-acid biosynthesis; L-isoleucine biosynthesis; L-isoleucine from 2-oxobutanoate: step 1/4. The protein operates within amino-acid biosynthesis; L-valine biosynthesis; L-valine from pyruvate: step 1/4. Functionally, regulatory subunit of acetohydroxy-acid synthase. Involved in the feed-back inhibition by branched-chain amino acids but not in herbicide tolerance. May play a role in valine and isoleucine-mediated feedback inhibition in roots. In vitro, inhibited by valine, but not leucine or isoleucine. Required for reproductive development and sodium homeostasis. The sequence is that of Acetolactate synthase small subunit 2, chloroplastic from Arabidopsis thaliana (Mouse-ear cress).